An 843-amino-acid chain; its full sequence is Urease (843 aa).

The Urease domain maps to Gly400–Phe843. 3 residues coordinate Ni(2+): His405, His407, and Lys488. An N6-carboxylysine modification is found at Lys488. Residue His490 coordinates substrate. Ni(2+) contacts are provided by His517 and His543. His591 (proton donor) is an active-site residue. Residue Asp631 participates in Ni(2+) binding.

This sequence in the C-terminal section; belongs to the metallo-dependent hydrolases superfamily. Urease alpha subunit family. In terms of assembly, homohexamer. Other oligomeric forms may exist depending on pH and presence of salts. Ni(2+) is required as a cofactor. Post-translationally, carboxylation allows a single lysine to coordinate two nickel ions.

The enzyme catalyses urea + 2 H2O + H(+) = hydrogencarbonate + 2 NH4(+). It functions in the pathway nitrogen metabolism; urea degradation; CO(2) and NH(3) from urea (urease route): step 1/1. Functionally, urea hydrolase involved in nitrogen recycling from ureide, purine, and arginine catabolism. This Oryza sativa subsp. indica (Rice) protein is Urease.